A 107-amino-acid chain; its full sequence is Diuretic hormone 45 (107 aa).

Positions 1–44 (LYAMSPMAARYSAGAPWLYLLADMPRDSQRLVDPADLHEGRARP) are excised as a propeptide. Val-91 is modified (valine amide).

Expressed in corpora cardiaca (CC), corpora allata (CA), antennal lobe (AL) and gnathal ganglion (GNG) (at protein level). Expression in AL and GNG detected in some animals, in CC and CA in few animals (at protein level).

Its subcellular location is the secreted. Its function is as follows. Regulation of fluid secretion. This is Diuretic hormone 45 from Agrotis ipsilon (Black cutworm moth).